A 457-amino-acid polypeptide reads, in one-letter code: Serine--tRNA ligase (457 aa).

252–254 (TAE) is a binding site for L-serine. ATP contacts are provided by residues 283–285 (RKE) and valine 299. Glutamate 306 provides a ligand contact to L-serine. 370–373 (EMVS) serves as a coordination point for ATP. Residue threonine 406 coordinates L-serine.

It belongs to the class-II aminoacyl-tRNA synthetase family. Type-1 seryl-tRNA synthetase subfamily. As to quaternary structure, homodimer. The tRNA molecule binds across the dimer.

It localises to the cytoplasm. It carries out the reaction tRNA(Ser) + L-serine + ATP = L-seryl-tRNA(Ser) + AMP + diphosphate + H(+). It catalyses the reaction tRNA(Sec) + L-serine + ATP = L-seryl-tRNA(Sec) + AMP + diphosphate + H(+). Its pathway is aminoacyl-tRNA biosynthesis; selenocysteinyl-tRNA(Sec) biosynthesis; L-seryl-tRNA(Sec) from L-serine and tRNA(Sec): step 1/1. Functionally, catalyzes the attachment of serine to tRNA(Ser). Is also able to aminoacylate tRNA(Sec) with serine, to form the misacylated tRNA L-seryl-tRNA(Sec), which will be further converted into selenocysteinyl-tRNA(Sec). The protein is Serine--tRNA ligase of Saccharolobus islandicus (strain Y.N.15.51 / Yellowstone #2) (Sulfolobus islandicus).